A 472-amino-acid chain; its full sequence is UDP-glucuronosyltransferase (472 aa).

N-linked (GlcNAc...) asparagine glycosylation is found at Asn-59, Asn-227, and Asn-377. Residues 436–456 (FGFILLILLTVLWVTLKCCLF) form a helical membrane-spanning segment.

Belongs to the UDP-glycosyltransferase family.

Its subcellular location is the microsome membrane. It localises to the endoplasmic reticulum membrane. It catalyses the reaction glucuronate acceptor + UDP-alpha-D-glucuronate = acceptor beta-D-glucuronoside + UDP + H(+). Its function is as follows. UDPGT is of major importance in the conjugation and subsequent elimination of potentially toxic xenobiotics and endogenous compounds. The chain is UDP-glucuronosyltransferase (ugt3) from Pleuronectes platessa (European plaice).